A 764-amino-acid polypeptide reads, in one-letter code: Putative wall-associated receptor kinase-like 13 (764 aa).

Residues 1-26 form the signal peptide; it reads MRGNKNYYFLSLLYFLSLPILHFSSC. The Extracellular segment spans residues 27-379; that stretch reads THKCGDIQIP…HRCIDYHIPE (353 aa). Residues Asn78, Asn114, Asn121, Asn164, Asn233, Asn238, Asn259, and Asn283 are each glycosylated (N-linked (GlcNAc...) asparagine). Positions 308–372 are atypical EGF-like; the sequence is CTCDNHIASG…CINTSGGHRC (65 aa). Intrachain disulfides connect Cys310–Cys323, Cys345–Cys363, and Cys352–Cys372. Residue Asn365 is glycosylated (N-linked (GlcNAc...) asparagine). A helical membrane pass occupies residues 380 to 400; sequence VMLGLGAGFFVLIVGGGIWWW. The Cytoplasmic segment spans residues 401–764; that stretch reads RKLLRKRRMT…SGSTEIARSM (364 aa). Positions 454-728 constitute a Protein kinase domain; the sequence is FNDNRVIGQG…REVSTALERI (275 aa). Residues 460–468 and Lys482 each bind ATP; that span reads IGQGGQGTV. A Phosphotyrosine modification is found at Tyr527. Asp579 (proton acceptor) is an active-site residue. Residues Thr613 and Thr618 each carry the phosphothreonine modification. Tyr626 bears the Phosphotyrosine mark.

The protein belongs to the protein kinase superfamily. Ser/Thr protein kinase family.

The protein resides in the membrane. It carries out the reaction L-seryl-[protein] + ATP = O-phospho-L-seryl-[protein] + ADP + H(+). The enzyme catalyses L-threonyl-[protein] + ATP = O-phospho-L-threonyl-[protein] + ADP + H(+). In terms of biological role, putative serine/threonine-protein kinase that may function as a signaling receptor of extracellular matrix component. This chain is Putative wall-associated receptor kinase-like 13 (WAKL13), found in Arabidopsis thaliana (Mouse-ear cress).